The following is a 330-amino-acid chain: DNA repair and recombination protein RadA (330 aa).

124–131 (GEFGSGKT) provides a ligand contact to ATP.

This sequence belongs to the eukaryotic RecA-like protein family.

Involved in DNA repair and in homologous recombination. Binds and assemble on single-stranded DNA to form a nucleoprotein filament. Hydrolyzes ATP in a ssDNA-dependent manner and promotes DNA strand exchange between homologous DNA molecules. The chain is DNA repair and recombination protein RadA from Pyrobaculum neutrophilum (strain DSM 2338 / JCM 9278 / NBRC 100436 / V24Sta) (Thermoproteus neutrophilus).